We begin with the raw amino-acid sequence, 212 residues long: Ribonuclease HII (212 aa).

In terms of domain architecture, RNase H type-2 spans 17–206 (RVIAGVDEAG…KSTKPQSLQT (190 aa)). Positions 23, 24, and 115 each coordinate a divalent metal cation.

Belongs to the RNase HII family. Requires Mn(2+) as cofactor. The cofactor is Mg(2+).

Its subcellular location is the cytoplasm. The enzyme catalyses Endonucleolytic cleavage to 5'-phosphomonoester.. In terms of biological role, endonuclease that specifically degrades the RNA of RNA-DNA hybrids. The sequence is that of Ribonuclease HII from Syntrophus aciditrophicus (strain SB).